A 354-amino-acid polypeptide reads, in one-letter code: Adenine deaminase (354 aa).

Zn(2+) is bound by residues histidine 19, histidine 21, and histidine 211. Residue glutamate 214 is the Proton donor of the active site. Aspartate 291 contacts Zn(2+). Aspartate 292 serves as a coordination point for substrate.

It belongs to the metallo-dependent hydrolases superfamily. Adenosine and AMP deaminases family. Adenine deaminase type 2 subfamily. The cofactor is Zn(2+).

The protein localises to the cytoplasm. Its subcellular location is the nucleus. The catalysed reaction is adenine + H2O + H(+) = hypoxanthine + NH4(+). Its function is as follows. Catalyzes the hydrolytic deamination of adenine to hypoxanthine. Plays an important role in the purine salvage pathway and in nitrogen catabolism. This chain is Adenine deaminase (aah1), found in Aspergillus fumigatus (strain ATCC MYA-4609 / CBS 101355 / FGSC A1100 / Af293) (Neosartorya fumigata).